Reading from the N-terminus, the 389-residue chain is Meiosis-specific protein MEI4 (389 aa).

The interaction with REC114 stretch occupies residues 1 to 127; that stretch reads MDIQPWYLKT…LSQHFVESTD (127 aa).

Belongs to the MEI4L family. In terms of assembly, part of the MCD recombinosome complex, at least composed of IHO1, REC114 and MEI4. Forms a complex with REC114; the interaction is required for MEI4 stability. Interacts (via N-terminal domain) with REC114 (via C-terminal domain). Interacts with IHO1. As to expression, expressed in adult testis and brain and in embryonic ovary.

The protein localises to the chromosome. In terms of biological role, required for DNA double-strand breaks (DSBs) formation in unsynapsed regions during meiotic recombination. Probably acts by forming a complex with IHO1 and REC114, which activates DSBs formation in unsynapsed regions, an essential step to ensure completion of synapsis. The sequence is that of Meiosis-specific protein MEI4 from Mus musculus (Mouse).